Here is a 1503-residue protein sequence, read N- to C-terminus: EF-hand calcium-binding domain-containing protein 5 (1503 aa).

A disordered region spans residues 1-23 (MNESASQEELRPAQENRKEDKER). The segment covering 8–23 (EELRPAQENRKEDKER) has biased composition (basic and acidic residues). At serine 77 the chain carries Phosphoserine. 3 disordered regions span residues 477 to 518 (ASKT…EQGP), 544 to 656 (IEPG…QGPY), and 730 to 750 (FPET…KSQK). The span at 549–561 (HTESTLEQGSSRR) shows a compositional bias: polar residues. Basic and acidic residues-rich tracts occupy residues 562–582 (LLTE…HKGS) and 607–622 (GSRR…HKGS). The 36-residue stretch at 869–904 (RQRLLLEAIFQKWDSDGSGFLDLKEVDELLYTYKEG) folds into the EF-hand domain. The Ca(2+) site is built by aspartate 882, aspartate 884, serine 886, and glutamate 893.

The polypeptide is EF-hand calcium-binding domain-containing protein 5 (EFCAB5) (Homo sapiens (Human)).